Reading from the N-terminus, the 251-residue chain is NADPH-dependent oxidoreductase (251 aa).

This sequence belongs to the flavin oxidoreductase frp family. The cofactor is FMN.

Functionally, reduces FMN, organic nitro compounds and disulfide DTNB. Involved in maintenance of the cellular redox state and the disulfide stress response. The polypeptide is NADPH-dependent oxidoreductase (nfrA) (Staphylococcus aureus (strain Mu50 / ATCC 700699)).